A 123-amino-acid chain; its full sequence is Large ribosomal subunit protein bL12 (123 aa).

It belongs to the bacterial ribosomal protein bL12 family. Homodimer. Part of the ribosomal stalk of the 50S ribosomal subunit. Forms a multimeric L10(L12)X complex, where L10 forms an elongated spine to which 2 to 4 L12 dimers bind in a sequential fashion. Binds GTP-bound translation factors.

Its function is as follows. Forms part of the ribosomal stalk which helps the ribosome interact with GTP-bound translation factors. Is thus essential for accurate translation. The sequence is that of Large ribosomal subunit protein bL12 from Mycoplasmopsis agalactiae (strain NCTC 10123 / CIP 59.7 / PG2) (Mycoplasma agalactiae).